The chain runs to 480 residues: MDALEAPELLLLPHLSALTPKTGFLIGLALAITAYCYYRHTQHPLYKFPGPRSAAWSNVLYCYYYIQGRQPFKLLELHNQYGSVVRTAPNDLSFNTAGAFRDIYNFRPGHETFIKSDWYDGGVFADKAHSIVSEREPGKHGHMRKYLSHAFSDKSLKAQEPLIDEVVNEFVSQLDVFGSKKGGIDIVVWFNLATFDIIGSLAFGESFGGVKSGEVHPWISRIITAIGQSALADAFKRFPKFATTFKWLFPKAIEKMLEDTAGHENYTISLIDKRLSNPSTRPDFLTRMLENRPEDLTDVQIAAHASDFVIAGSETTATTLSCIVYYLTKNPSVYQKATQEIRDRFERFEDINSTAASQLKYLHALALEAMRIYPPLPLALPRVVPKGGDTIDGHFVAEGTIVSVNPVAACLSTKNFDAPLEFRPERWLESDLVDDHEASQPFSMGPRACLGRNLAWIELSLLLSKMLWVYDIELLNTEVD.

The chain crosses the membrane as a helical span at residues 9–29 (LLLLPHLSALTPKTGFLIGLA). N-linked (GlcNAc...) asparagine glycosylation is found at Asn-265 and Asn-352. Cys-449 provides a ligand contact to heme.

The protein belongs to the cytochrome P450 family. Requires heme as cofactor.

It localises to the membrane. It functions in the pathway sesquiterpene biosynthesis. Functionally, cytochrome P450 monooxygenase; part of the gene cluster that mediates the biosynthesis of PR-toxin, a bicyclic sesquiterpene belonging to the eremophilane class and acting as a mycotoxin. The first step of the pathway is catalyzed by the aristolochene synthase which performs the cyclization of trans,trans-farnesyl diphosphate (FPP) to the bicyclic sesquiterpene aristolochene. Following the formation of aristolochene, the non-oxygenated aristolochene is converted to the trioxygenated intermediate eremofortin B, via 7-epi-neopetasone. This conversion appears to involve three enzymes, a hydroxysterol oxidase-like enzyme, the quinone-oxidase prx3 that forms the quinone-type-structure in the bicyclic nucleus of aristolochene with the C8-oxo group and the C-3 hydroxyl group, and the P450 monooxygenase ORF6 that introduces the epoxide at the double bond between carbons 1 and 2. No monoxy or dioxy-intermediates have been reported to be released to the broth, so these three early oxidative reactions may be coupled together. Eremofortin B is further oxidized by another P450 monooxygenase, that introduces a second epoxide between carbons 7 and 11 prior to acetylation to eremofortin A by the acetyltransferase ORF8. The second epoxidation may be performed by a second P450 monooxygenase. After the acetylation step, eremofortin A is converted to eremofortin C and then to PR-toxin. First the conversion of eremofortin A to eremofortin C proceeds by oxidation of the side chain of the molecule at C-12 and is catalyzed by the short-chain oxidoreductase prx1. The cytochrome P450 monooxygenase ORF6 is probably also involved in this step. The primary alcohol formed at C-12 is finally oxidized by the short-chain alcohol dehydrogenase prx4 that forms PR-toxin. The protein is Cytochrome P450 monooxygenase ORF11 of Penicillium roqueforti (strain FM164).